Reading from the N-terminus, the 77-residue chain is Acyl carrier protein (77 aa).

The region spanning 2–77 (ASIEKRIKEI…DAIDYITDHT (76 aa)) is the Carrier domain. S37 is subject to O-(pantetheine 4'-phosphoryl)serine.

It belongs to the acyl carrier protein (ACP) family. Post-translationally, 4'-phosphopantetheine is transferred from CoA to a specific serine of apo-ACP by AcpS. This modification is essential for activity because fatty acids are bound in thioester linkage to the sulfhydryl of the prosthetic group.

It localises to the cytoplasm. It functions in the pathway lipid metabolism; fatty acid biosynthesis. Carrier of the growing fatty acid chain in fatty acid biosynthesis. This chain is Acyl carrier protein, found in Geobacter sp. (strain M21).